A 309-amino-acid polypeptide reads, in one-letter code: Homoserine kinase (309 aa).

Position 91 to 101 (91 to 101) interacts with ATP; sequence PIGSGLGSSAC.

Belongs to the GHMP kinase family. Homoserine kinase subfamily.

The protein resides in the cytoplasm. It carries out the reaction L-homoserine + ATP = O-phospho-L-homoserine + ADP + H(+). It functions in the pathway amino-acid biosynthesis; L-threonine biosynthesis; L-threonine from L-aspartate: step 4/5. Its function is as follows. Catalyzes the ATP-dependent phosphorylation of L-homoserine to L-homoserine phosphate. The polypeptide is Homoserine kinase (Salmonella dublin (strain CT_02021853)).